The chain runs to 356 residues: Putative [LysW]-L-2-aminoadipate/[LysW]-L-glutamate phosphate reductase (356 aa).

11 to 14 (SGYT) contacts NADP(+). Cys157 is an active-site residue. NADP(+) is bound at residue Asn323.

It belongs to the NAGSA dehydrogenase family. Type 1 subfamily. LysY sub-subfamily.

The protein localises to the cytoplasm. It carries out the reaction [amino-group carrier protein]-C-terminal-N-(1-carboxy-5-oxopentan-1-yl)-L-glutamine + phosphate + NADP(+) = [amino-group carrier protein]-C-terminal-N-(1-carboxy-5-phosphooxy-5-oxopentan-1-yl)-L-glutamine + NADPH + H(+). The catalysed reaction is [amino-group carrier protein]-C-terminal-gamma-(L-glutamyl-5-semialdehyde)-L-glutamate + phosphate + NADP(+) = [amino-group carrier protein]-C-terminal-gamma-(5-phospho-L-glutamyl)-L-glutamate + NADPH + H(+). Its pathway is amino-acid biosynthesis; L-lysine biosynthesis via AAA pathway; L-lysine from L-alpha-aminoadipate (Thermus route): step 3/5. It functions in the pathway amino-acid biosynthesis; L-arginine biosynthesis. Involved in both the arginine and lysine biosynthetic pathways. This chain is Putative [LysW]-L-2-aminoadipate/[LysW]-L-glutamate phosphate reductase, found in Ignicoccus hospitalis (strain KIN4/I / DSM 18386 / JCM 14125).